The primary structure comprises 101 residues: Urease subunit gamma (101 aa).

It belongs to the urease gamma subunit family. In terms of assembly, heterotrimer of UreA (gamma), UreB (beta) and UreC (alpha) subunits. Three heterotrimers associate to form the active enzyme.

The protein resides in the cytoplasm. The catalysed reaction is urea + 2 H2O + H(+) = hydrogencarbonate + 2 NH4(+). Its pathway is nitrogen metabolism; urea degradation; CO(2) and NH(3) from urea (urease route): step 1/1. This chain is Urease subunit gamma, found in Ureaplasma urealyticum (Ureaplasma urealyticum biotype 2).